The sequence spans 167 residues: Leptin (167 aa).

A signal peptide spans Met1–Ala21. An intrachain disulfide couples Cys117 to Cys167.

It belongs to the leptin family.

It localises to the secreted. In terms of biological role, key player in the regulation of energy balance and body weight control. Once released into the circulation, has central and peripheral effects by binding LEPR, found in many tissues, which results in the activation of several major signaling pathways. In the hypothalamus, acts as an appetite-regulating factor that induces a decrease in food intake and an increase in energy consumption by inducing anorexinogenic factors and suppressing orexigenic neuropeptides, also regulates bone mass and secretion of hypothalamo-pituitary-adrenal hormones. In the periphery, increases basal metabolism, influences reproductive function, regulates pancreatic beta-cell function and insulin secretion, is pro-angiogenic for endothelial cell and affects innate and adaptive immunity. In the arcuate nucleus of the hypothalamus, activates by depolarization POMC neurons inducing FOS and SOCS3 expression to release anorexigenic peptides and inhibits by hyperpolarization NPY neurons inducing SOCS3 with a consequent reduction on release of orexigenic peptides. In addition to its known satiety inducing effect, has a modulatory role in nutrient absorption. In the intestine, reduces glucose absorption by enterocytes by activating PKC and leading to a sequential activation of p38, PI3K and ERK signaling pathways which exerts an inhibitory effect on glucose absorption. Acts as a growth factor on certain tissues, through the activation of different signaling pathways increases expression of genes involved in cell cycle regulation such as CCND1, via JAK2-STAT3 pathway, or VEGFA, via MAPK1/3 and PI3K-AKT1 pathways. May also play an apoptotic role via JAK2-STAT3 pathway and up-regulation of BIRC5 expression. Pro-angiogenic, has mitogenic activity on vascular endothelial cells and plays a role in matrix remodeling by regulating the expression of matrix metalloproteinases (MMPs) and tissue inhibitors of metalloproteinases (TIMPs). In innate immunity, modulates the activity and function of neutrophils by increasing chemotaxis and the secretion of oxygen radicals. Increases phagocytosis by macrophages and enhances secretion of pro-inflammatory mediators. Increases cytotoxic ability of NK cells. Plays a pro-inflammatory role, in synergy with IL1B, by inducing NOS2 which promotes the production of IL6, IL8 and Prostaglandin E2, through a signaling pathway that involves JAK2, PI3K, MAP2K1/MEK1 and MAPK14/p38. In adaptive immunity, promotes the switch of memory T-cells towards T helper-1 cell immune responses. Increases CD4(+)CD25(-) T-cell proliferation and reduces autophagy during TCR (T-cell receptor) stimulation, through MTOR signaling pathway activation and BCL2 up-regulation. The protein is Leptin (LEP) of Sminthopsis crassicaudata (Fat-tailed dunnart).